A 181-amino-acid polypeptide reads, in one-letter code: MAEPRRALAQMDDARISVGNARFLIIEAPYYEDIAAQLRAGAEAALTRAQARFDVVSVPGALEIPIALAIALDRAPALYQGAIALGCIIRGETYHFEIVANESARALTQLVVERKLPFGNGILTVETETQALERASVESGDKGGDAARAALALYRFSQEFGQVVEQAQIQAQRPVLTSGAR.

5-amino-6-(D-ribitylamino)uracil contacts are provided by residues Tyr-30, 61–63 (ALE), and 87–89 (CII). 92–93 (ET) contributes to the (2S)-2-hydroxy-3-oxobutyl phosphate binding site. The Proton donor role is filled by His-95. Residue Asn-120 participates in 5-amino-6-(D-ribitylamino)uracil binding. (2S)-2-hydroxy-3-oxobutyl phosphate is bound at residue Arg-134.

Belongs to the DMRL synthase family.

The catalysed reaction is (2S)-2-hydroxy-3-oxobutyl phosphate + 5-amino-6-(D-ribitylamino)uracil = 6,7-dimethyl-8-(1-D-ribityl)lumazine + phosphate + 2 H2O + H(+). The protein operates within cofactor biosynthesis; riboflavin biosynthesis; riboflavin from 2-hydroxy-3-oxobutyl phosphate and 5-amino-6-(D-ribitylamino)uracil: step 1/2. Its function is as follows. Catalyzes the formation of 6,7-dimethyl-8-ribityllumazine by condensation of 5-amino-6-(D-ribitylamino)uracil with 3,4-dihydroxy-2-butanone 4-phosphate. This is the penultimate step in the biosynthesis of riboflavin. In Beijerinckia indica subsp. indica (strain ATCC 9039 / DSM 1715 / NCIMB 8712), this protein is 6,7-dimethyl-8-ribityllumazine synthase.